The following is a 226-amino-acid chain: ATP synthase F(0) complex subunit a (226 aa).

The next 6 helical transmembrane spans lie at 12–32 (PTVL…LLIP), 68–88 (WSLM…LGLL), 97–117 (QLSM…AMGL), 138–158 (IPML…ALAV), 182–202 (LAIN…LTIL), and 203–223 (ETAI…LYLH).

Belongs to the ATPase A chain family. In terms of assembly, component of the ATP synthase complex composed at least of ATP5F1A/subunit alpha, ATP5F1B/subunit beta, ATP5MC1/subunit c (homooctomer), MT-ATP6/subunit a, MT-ATP8/subunit 8, ATP5ME/subunit e, ATP5MF/subunit f, ATP5MG/subunit g, ATP5MK/subunit k, ATP5MJ/subunit j, ATP5F1C/subunit gamma, ATP5F1D/subunit delta, ATP5F1E/subunit epsilon, ATP5PF/subunit F6, ATP5PB/subunit b, ATP5PD/subunit d, ATP5PO/subunit OSCP. ATP synthase complex consists of a soluble F(1) head domain (subunits alpha(3) and beta(3)) - the catalytic core - and a membrane F(0) domain - the membrane proton channel (subunits c, a, 8, e, f, g, k and j). These two domains are linked by a central stalk (subunits gamma, delta, and epsilon) rotating inside the F1 region and a stationary peripheral stalk (subunits F6, b, d, and OSCP). Interacts with DNAJC30; interaction is direct.

Its subcellular location is the mitochondrion inner membrane. The enzyme catalyses H(+)(in) = H(+)(out). Subunit a, of the mitochondrial membrane ATP synthase complex (F(1)F(0) ATP synthase or Complex V) that produces ATP from ADP in the presence of a proton gradient across the membrane which is generated by electron transport complexes of the respiratory chain. ATP synthase complex consist of a soluble F(1) head domain - the catalytic core - and a membrane F(1) domain - the membrane proton channel. These two domains are linked by a central stalk rotating inside the F(1) region and a stationary peripheral stalk. During catalysis, ATP synthesis in the catalytic domain of F(1) is coupled via a rotary mechanism of the central stalk subunits to proton translocation. With the subunit c (ATP5MC1), forms the proton-conducting channel in the F(0) domain, that contains two crucial half-channels (inlet and outlet) that facilitate proton movement from the mitochondrial intermembrane space (IMS) into the matrix. Protons are taken up via the inlet half-channel and released through the outlet half-channel, following a Grotthuss mechanism. The protein is ATP synthase F(0) complex subunit a of Pongo abelii (Sumatran orangutan).